A 400-amino-acid polypeptide reads, in one-letter code: Tryptophan synthase beta chain (400 aa).

Lys-90 bears the N6-(pyridoxal phosphate)lysine mark.

This sequence belongs to the TrpB family. In terms of assembly, tetramer of two alpha and two beta chains. Requires pyridoxal 5'-phosphate as cofactor.

The catalysed reaction is (1S,2R)-1-C-(indol-3-yl)glycerol 3-phosphate + L-serine = D-glyceraldehyde 3-phosphate + L-tryptophan + H2O. Its pathway is amino-acid biosynthesis; L-tryptophan biosynthesis; L-tryptophan from chorismate: step 5/5. Functionally, the beta subunit is responsible for the synthesis of L-tryptophan from indole and L-serine. The protein is Tryptophan synthase beta chain of Bacillus velezensis (strain DSM 23117 / BGSC 10A6 / LMG 26770 / FZB42) (Bacillus amyloliquefaciens subsp. plantarum).